Reading from the N-terminus, the 695-residue chain is MNLRSVFTVEQQRILQRYYENGMTNQSKNCFQLILQCAQETKLDFSVVRTWVGNKRRKMSSKSALESGGAPPGTAHTAPSVPPEAMVRNVVNIARSQSQQSSWTSSNNDVIVTGIYSPASSSNRQGSTKQTNASMAEIHKTSIPRLPGKSDADFQQQHIPIGRQIPHCKNASLLVGEKTIILSRQTSVLNSANSIYSHTKKSYGGSSVQTAELVLPQKPMICHRPCKAELMGCQRLQKPEHAALASHGPPGQRANARDPCSTQNLEIREVFSLAVTDQPQRIVGGSTAQKHCSVEGSSLSIAMETGDVDDEYAREEELASMGAQIQSYSRYYESSSSIRVENQSAALSGPGRNVSCSSQMVNARDVPDSMLYHSRDYHLPARTSLHTSSTLYNSANTSRNTFSPHFTSSNQLRLSQNQNNYQISGNLTVPWITGCSRKRALQDRTQFSDRDLATLKKYWDNGMTSLGSVCREKIEAVAAELNVDCEIVRTWIGNRRRKYRLMGIEVPPPRGGPADFSDQSEFVSKSALNPGEETATEVGDDNDRNDEVSICLSEGSSQEETNEVLQNEEIHHKDDDRNPVSADNVKIEIIDDEESDMISNSEVDQMSSLLDYKNEEVRFIENELENHKQKYFELQTFTRSLILAIKSDDKEQQQALLSDLPPELEEMDFNHTSPEPDDTSFSLSSLSEKNASDSL.

DNA-binding regions (homeobox) lie at residues 3-63 (LRSV…SSKS) and 440-503 (ALQD…RLMG). The segment at 56–81 (RRKMSSKSALESGGAPPGTAHTAPSV) is disordered. Residues 653 to 695 (QQALLSDLPPELEEMDFNHTSPEPDDTSFSLSSLSEKNASDSL) form a disordered region. Residues 679–695 (TSFSLSSLSEKNASDSL) are compositionally biased toward polar residues.

It localises to the nucleus. The polypeptide is Highly divergent homeobox (HDX) (Gallus gallus (Chicken)).